Reading from the N-terminus, the 423-residue chain is GPI mannosyltransferase 2 (423 aa).

The next 9 helical transmembrane spans lie at 11–31 (ILSL…IALG), 106–126 (WEAL…VLAL), 139–159 (LAYL…ISAP), 160–180 (YAES…AISL), 197–219 (GLSY…LFAV), 240–260 (LVAP…PQVL), 299–319 (YWTP…TILL), 351–371 (LAAI…VQII), and 400–420 (GVIV…ASFL).

This sequence belongs to the PIGV family.

It is found in the endoplasmic reticulum membrane. The protein operates within glycolipid biosynthesis; glycosylphosphatidylinositol-anchor biosynthesis. Functionally, mannosyltransferase involved in glycosylphosphatidylinositol-anchor biosynthesis. Transfers the second mannose to the glycosylphosphatidylinositol during GPI precursor assembly. In Gibberella zeae (strain ATCC MYA-4620 / CBS 123657 / FGSC 9075 / NRRL 31084 / PH-1) (Wheat head blight fungus), this protein is GPI mannosyltransferase 2 (GPI18).